The following is an 86-amino-acid chain: MKEGIHPNYREVVFQDMSSDFSFITRSTIQTKDTIVKDGKEYPLAKIEVSSESHPFYTGTQKIMDTAGRVEKFRQKFGNKLGKAAK.

It belongs to the bacterial ribosomal protein bL31 family. Type B subfamily. Part of the 50S ribosomal subunit.

The sequence is that of Large ribosomal subunit protein bL31B from Cupriavidus taiwanensis (strain DSM 17343 / BCRC 17206 / CCUG 44338 / CIP 107171 / LMG 19424 / R1) (Ralstonia taiwanensis (strain LMG 19424)).